Reading from the N-terminus, the 532-residue chain is Di/tripeptide-binding protein 2 (532 aa).

The signal sequence occupies residues M1–A24.

Belongs to the bacterial solute-binding protein 5 family. In terms of assembly, the complex is composed of two ATP-binding proteins (DppD and DppF), two transmembrane proteins (DppB and DppC) and a solute-binding protein (DppA2). Five orthologous SBPs (DppA1-A5) are present in P.aeruginosa, which increases the substrate specificity of the DppBCDF transporter.

Part of the ABC transporter DppABCDF involved in the uptake of various di/tripeptides. Shows high flexibility on substrate recognition. Efficiently uses tripeptides. The polypeptide is Di/tripeptide-binding protein 2 (Pseudomonas aeruginosa (strain UCBPP-PA14)).